A 159-amino-acid polypeptide reads, in one-letter code: E3 ubiquitin ligase complex SCF subunit sconC (159 aa).

The segment at 101-159 (ILAANYLDIKALLDVGCKTVANMIKGKSPEEIRKTFNIQNDFTPEEEDQIRRENEWAEE) is interaction with the F-box domain of F-box proteins.

This sequence belongs to the SKP1 family. As to quaternary structure, component of the SCF (SKP1-CUL1-F-box protein) E3 ubiquitin ligase complexes.

It participates in protein modification; protein ubiquitination. In terms of biological role, essential component of the SCF (SKP1-CUL1-F-box protein) E3 ubiquitin ligase complexes, which mediate the ubiquitination and subsequent proteasomal degradation of target proteins. Controls sulfur metabolite repression, probably by mediating the inactivation or degradation of the metR transcription factor. The protein is E3 ubiquitin ligase complex SCF subunit sconC (sconC) of Aspergillus clavatus (strain ATCC 1007 / CBS 513.65 / DSM 816 / NCTC 3887 / NRRL 1 / QM 1276 / 107).